We begin with the raw amino-acid sequence, 1073 residues long: Carbamoyl phosphate synthase large chain (1073 aa).

The tract at residues 2–403 is carboxyphosphate synthetic domain; it reads PKRTDIKSIL…SVQKALRGLE (402 aa). ATP-binding residues include arginine 129, arginine 169, glycine 175, glycine 176, glutamate 208, leucine 210, glutamate 215, glycine 241, valine 242, histidine 243, glutamine 285, and glutamate 299. The ATP-grasp 1 domain maps to 133–328; that stretch reads DKAMKDIGLA…IAKIAAKLAV (196 aa). The Mg(2+) site is built by glutamine 285, glutamate 299, and asparagine 301. Mn(2+) is bound by residues glutamine 285, glutamate 299, and asparagine 301. The oligomerization domain stretch occupies residues 404-553; the sequence is VGATGFDPKL…YSTYEEECEA (150 aa). Residues 554–935 form a carbamoyl phosphate synthetic domain region; that stretch reads NPSSREKIMI…AFAKAQLGAS (382 aa). The ATP-grasp 2 domain occupies 678 to 869; the sequence is QQMVQRLNLR…LAKVAARVMA (192 aa). ATP is bound by residues arginine 714, histidine 753, leucine 755, glutamate 760, glycine 785, valine 786, histidine 787, serine 788, glutamine 828, and glutamate 840. Glutamine 828, glutamate 840, and asparagine 842 together coordinate Mg(2+). The Mn(2+) site is built by glutamine 828, glutamate 840, and asparagine 842. Positions 936-1073 constitute an MGS-like domain; the sequence is EILPTAGCAF…LQDLHAGIKA (138 aa). An allosteric domain region spans residues 936–1073; it reads EILPTAGCAF…LQDLHAGIKA (138 aa).

The protein belongs to the CarB family. In terms of assembly, composed of two chains; the small (or glutamine) chain promotes the hydrolysis of glutamine to ammonia, which is used by the large (or ammonia) chain to synthesize carbamoyl phosphate. Tetramer of heterodimers (alpha,beta)4. Requires Mg(2+) as cofactor. It depends on Mn(2+) as a cofactor.

The enzyme catalyses hydrogencarbonate + L-glutamine + 2 ATP + H2O = carbamoyl phosphate + L-glutamate + 2 ADP + phosphate + 2 H(+). It carries out the reaction hydrogencarbonate + NH4(+) + 2 ATP = carbamoyl phosphate + 2 ADP + phosphate + 2 H(+). It participates in amino-acid biosynthesis; L-arginine biosynthesis; carbamoyl phosphate from bicarbonate: step 1/1. The protein operates within pyrimidine metabolism; UMP biosynthesis via de novo pathway; (S)-dihydroorotate from bicarbonate: step 1/3. Functionally, large subunit of the glutamine-dependent carbamoyl phosphate synthetase (CPSase). CPSase catalyzes the formation of carbamoyl phosphate from the ammonia moiety of glutamine, carbonate, and phosphate donated by ATP, constituting the first step of 2 biosynthetic pathways, one leading to arginine and/or urea and the other to pyrimidine nucleotides. The large subunit (synthetase) binds the substrates ammonia (free or transferred from glutamine from the small subunit), hydrogencarbonate and ATP and carries out an ATP-coupled ligase reaction, activating hydrogencarbonate by forming carboxy phosphate which reacts with ammonia to form carbamoyl phosphate. The sequence is that of Carbamoyl phosphate synthase large chain from Pseudomonas aeruginosa (strain ATCC 15692 / DSM 22644 / CIP 104116 / JCM 14847 / LMG 12228 / 1C / PRS 101 / PAO1).